A 426-amino-acid polypeptide reads, in one-letter code: 3-phosphoshikimate 1-carboxyvinyltransferase (426 aa).

The 3-phosphoshikimate site is built by K22, S23, and R27. Phosphoenolpyruvate is bound at residue K22. The phosphoenolpyruvate site is built by G96 and R124. 3-phosphoshikimate is bound by residues S170 and S171. Phosphoenolpyruvate is bound at residue Q172. 3-phosphoshikimate-binding residues include S198, D314, N337, and K341. The active-site Proton acceptor is the D314. Phosphoenolpyruvate contacts are provided by R345, R387, and K412.

This sequence belongs to the EPSP synthase family. In terms of assembly, homotetramer.

The protein resides in the cytoplasm. It carries out the reaction 3-phosphoshikimate + phosphoenolpyruvate = 5-O-(1-carboxyvinyl)-3-phosphoshikimate + phosphate. Its pathway is metabolic intermediate biosynthesis; chorismate biosynthesis; chorismate from D-erythrose 4-phosphate and phosphoenolpyruvate: step 6/7. In terms of biological role, catalyzes the transfer of the enolpyruvyl moiety of phosphoenolpyruvate (PEP) to the 5-hydroxyl of shikimate-3-phosphate (S3P) to produce enolpyruvyl shikimate-3-phosphate and inorganic phosphate. The polypeptide is 3-phosphoshikimate 1-carboxyvinyltransferase (Vibrio cholerae serotype O1 (strain ATCC 39315 / El Tor Inaba N16961)).